Consider the following 633-residue polypeptide: tRNA uridine 5-carboxymethylaminomethyl modification enzyme MnmG (633 aa).

FAD is bound by residues 15-20, isoleucine 127, and serine 182; that span reads GAGHAG. 276–290 lines the NAD(+) pocket; that stretch reads GPRYCPSIEDKIVRF. Glutamine 373 lines the FAD pocket.

It belongs to the MnmG family. As to quaternary structure, homodimer. Heterotetramer of two MnmE and two MnmG subunits. The cofactor is FAD.

Its subcellular location is the cytoplasm. Functionally, NAD-binding protein involved in the addition of a carboxymethylaminomethyl (cmnm) group at the wobble position (U34) of certain tRNAs, forming tRNA-cmnm(5)s(2)U34. This is tRNA uridine 5-carboxymethylaminomethyl modification enzyme MnmG from Streptococcus agalactiae serotype III (strain NEM316).